Here is a 187-residue protein sequence, read N- to C-terminus: MVSGSFDIGDLKRRMQGATQSLKHELGGLRTGRASSSMLDPVQVDAYGSHMPLNQVATISVPEPRLLSVQVWDKSMVKAVEKAIVDSNLGLSPATEGQVLRLRIPELNEERRKELVKVAHKYAEAAKVAVRHVRRDGLDTLKKLEKNHEISEDDEKRLANDVQKATDSVISEIDQLLAGKEKEILTV.

This sequence belongs to the RRF family.

Its subcellular location is the cytoplasm. In terms of biological role, responsible for the release of ribosomes from messenger RNA at the termination of protein biosynthesis. May increase the efficiency of translation by recycling ribosomes from one round of translation to another. In Nitrobacter winogradskyi (strain ATCC 25391 / DSM 10237 / CIP 104748 / NCIMB 11846 / Nb-255), this protein is Ribosome-recycling factor.